We begin with the raw amino-acid sequence, 623 residues long: Glucokinase regulatory protein (623 aa).

SIS domains are found at residues 90-286 and 320-476; these read VQEV…QGVV and VGIS…VQKF. Residues 109–110, glutamate 153, and 179–181 each bind beta-D-fructose 1-phosphate; these read TS and SVG. 109–110 serves as a coordination point for beta-D-fructose 6-phosphate; sequence TS. 179–181 is a binding site for beta-D-fructose 6-phosphate; it reads SVG. The tract at residues 199–200 is important for interaction with GCK; it reads AV. Glutamate 348 is a binding site for beta-D-fructose 1-phosphate. Positions 463–465 are essential for interaction with GCK; the sequence is LLF.

It belongs to the GCKR family. As to quaternary structure, interacts (fructose 6-phosphate bound form) with GCK.

The protein resides in the cytoplasm. It is found in the nucleus. The protein localises to the mitochondrion. Its function is as follows. Regulates glucokinase (GCK) by forming an inactive complex with this enzyme. Acts by promoting GCK recruitment to the nucleus, possibly to provide a reserve of GCK that can be quickly released in the cytoplasm after a meal. The affinity of GCKR for GCK is modulated by fructose metabolites: GCKR with bound fructose 6-phosphate has increased affinity for GCK, while GCKR with bound fructose 1-phosphate has strongly decreased affinity for GCK and does not inhibit GCK activity. This chain is Glucokinase regulatory protein, found in Mus musculus (Mouse).